We begin with the raw amino-acid sequence, 77 residues long: Large ribosomal subunit protein uL24c (77 aa).

This sequence belongs to the universal ribosomal protein uL24 family. Part of the 50S ribosomal subunit.

It localises to the plastid. Its subcellular location is the chloroplast. Functionally, one of two assembly initiator proteins, it binds directly to the 5'-end of the 23S rRNA, where it nucleates assembly of the 50S subunit. This is Large ribosomal subunit protein uL24c (rpl24) from Trieres chinensis (Marine centric diatom).